The sequence spans 120 residues: NAD(P)H-quinone oxidoreductase subunit 3 (120 aa).

3 helical membrane passes run 6-26 (GYEY…LALT), 64-84 (MFAL…PWAV), and 89-109 (LGLL…VALA).

This sequence belongs to the complex I subunit 3 family. As to quaternary structure, NDH-1 can be composed of about 15 different subunits; different subcomplexes with different compositions have been identified which probably have different functions.

It is found in the cellular thylakoid membrane. The catalysed reaction is a plastoquinone + NADH + (n+1) H(+)(in) = a plastoquinol + NAD(+) + n H(+)(out). It carries out the reaction a plastoquinone + NADPH + (n+1) H(+)(in) = a plastoquinol + NADP(+) + n H(+)(out). In terms of biological role, NDH-1 shuttles electrons from an unknown electron donor, via FMN and iron-sulfur (Fe-S) centers, to quinones in the respiratory and/or the photosynthetic chain. The immediate electron acceptor for the enzyme in this species is believed to be plastoquinone. Couples the redox reaction to proton translocation, and thus conserves the redox energy in a proton gradient. Cyanobacterial NDH-1 also plays a role in inorganic carbon-concentration. This is NAD(P)H-quinone oxidoreductase subunit 3 from Prochlorococcus marinus (strain NATL1A).